A 206-amino-acid chain; its full sequence is RNA pyrophosphohydrolase (206 aa).

The 145-residue stretch at 6–150 folds into the Nudix hydrolase domain; it reads GYRPNVGIVI…KRDVYRKVMK (145 aa). Positions 38–59 match the Nudix box motif; it reads GGINEGENIETAMYRELYEEVG. The segment covering 162–191 has biased composition (basic and acidic residues); that stretch reads KPETVEKPRVERTEKRDFQKRDNQKREFRK. The segment at 162–206 is disordered; the sequence is KPETVEKPRVERTEKRDFQKRDNQKREFRKSARTWNNSHQKGKAQ.

It belongs to the Nudix hydrolase family. RppH subfamily. Requires a divalent metal cation as cofactor.

Its function is as follows. Accelerates the degradation of transcripts by removing pyrophosphate from the 5'-end of triphosphorylated RNA, leading to a more labile monophosphorylated state that can stimulate subsequent ribonuclease cleavage. In Actinobacillus pleuropneumoniae serotype 3 (strain JL03), this protein is RNA pyrophosphohydrolase.